The sequence spans 589 residues: Formate--tetrahydrofolate ligase (589 aa).

74–81 (TPFGEGKS) contacts ATP.

The protein belongs to the formate--tetrahydrofolate ligase family.

The enzyme catalyses (6S)-5,6,7,8-tetrahydrofolate + formate + ATP = (6R)-10-formyltetrahydrofolate + ADP + phosphate. It participates in one-carbon metabolism; tetrahydrofolate interconversion. In Thermodesulfovibrio yellowstonii (strain ATCC 51303 / DSM 11347 / YP87), this protein is Formate--tetrahydrofolate ligase.